Reading from the N-terminus, the 221-residue chain is Urease accessory protein UreG (221 aa).

Residue 19–26 (GPVGSGKT) participates in GTP binding.

Belongs to the SIMIBI class G3E GTPase family. UreG subfamily. As to quaternary structure, homodimer. UreD, UreF and UreG form a complex that acts as a GTP-hydrolysis-dependent molecular chaperone, activating the urease apoprotein by helping to assemble the nickel containing metallocenter of UreC. The UreE protein probably delivers the nickel.

It is found in the cytoplasm. In terms of biological role, facilitates the functional incorporation of the urease nickel metallocenter. This process requires GTP hydrolysis, probably effectuated by UreG. The protein is Urease accessory protein UreG of Yersinia enterocolitica serotype O:8 / biotype 1B (strain NCTC 13174 / 8081).